Here is a 511-residue protein sequence, read N- to C-terminus: 2-isopropylmalate synthase (511 aa).

Residues 5–267 (LIVFDTTLRD…DTNVDISQIV (263 aa)) form the Pyruvate carboxyltransferase domain. 4 residues coordinate Mn(2+): Asp14, His202, His204, and Asn238. Residues 393–511 (KLSWLKVVSE…YPVERAYPQV (119 aa)) form a regulatory domain region.

The protein belongs to the alpha-IPM synthase/homocitrate synthase family. LeuA type 1 subfamily. In terms of assembly, homodimer. Requires Mn(2+) as cofactor.

The protein localises to the cytoplasm. The catalysed reaction is 3-methyl-2-oxobutanoate + acetyl-CoA + H2O = (2S)-2-isopropylmalate + CoA + H(+). It functions in the pathway amino-acid biosynthesis; L-leucine biosynthesis; L-leucine from 3-methyl-2-oxobutanoate: step 1/4. Its function is as follows. Catalyzes the condensation of the acetyl group of acetyl-CoA with 3-methyl-2-oxobutanoate (2-ketoisovalerate) to form 3-carboxy-3-hydroxy-4-methylpentanoate (2-isopropylmalate). The chain is 2-isopropylmalate synthase from Nitrosococcus oceani (strain ATCC 19707 / BCRC 17464 / JCM 30415 / NCIMB 11848 / C-107).